The following is a 415-amino-acid chain: Transcriptional regulator fogI (415 aa).

The segment at residues 12-39 (CNACNESKVRCSQTKPTCARCERNKTTC) is a DNA-binding region (zn(2)-C6 fungal-type). Residues 50 to 153 (DAPPISLSHS…ILSPANLDLP (104 aa)) are disordered. Composition is skewed to low complexity over residues 80–102 (VHIP…STTT) and 123–135 (QFFA…HQQP).

Its subcellular location is the nucleus. In terms of biological role, transcriptional regulator that postively regulates the expression of the gene cluster that mediates the biosynthesis of flavoglaucin and congeners (including aspergin, dihydroauroglaucin and auroglaucin), prenylated salicylaldehyde derivatives carrying a saturated or an unsaturated C-7 side chain. This is Transcriptional regulator fogI from Aspergillus ruber (strain CBS 135680).